Consider the following 145-residue polypeptide: Small ribosomal subunit protein uS19 (145 aa).

An N-acetylalanine modification is found at alanine 2. Lysine 108 participates in a covalent cross-link: Glycyl lysine isopeptide (Lys-Gly) (interchain with G-Cter in SUMO2).

The protein belongs to the universal ribosomal protein uS19 family. In terms of assembly, component of the small ribosomal subunit.

The protein resides in the cytoplasm. Component of the small ribosomal subunit. The ribosome is a large ribonucleoprotein complex responsible for the synthesis of proteins in the cell. In Oryctolagus cuniculus (Rabbit), this protein is Small ribosomal subunit protein uS19 (RPS15).